Consider the following 304-residue polypeptide: Porphobilinogen deaminase (304 aa).

At Cys240 the chain carries S-(dipyrrolylmethanemethyl)cysteine.

It belongs to the HMBS family. Monomer. Dipyrromethane serves as cofactor.

The catalysed reaction is 4 porphobilinogen + H2O = hydroxymethylbilane + 4 NH4(+). It participates in porphyrin-containing compound metabolism; protoporphyrin-IX biosynthesis; coproporphyrinogen-III from 5-aminolevulinate: step 2/4. Tetrapolymerization of the monopyrrole PBG into the hydroxymethylbilane pre-uroporphyrinogen in several discrete steps. This chain is Porphobilinogen deaminase, found in Xanthomonas oryzae pv. oryzae (strain KACC10331 / KXO85).